Consider the following 61-residue polypeptide: Small ribosomal subunit protein uS14 (61 aa).

Zn(2+)-binding residues include C24, C27, C40, and C43.

This sequence belongs to the universal ribosomal protein uS14 family. Zinc-binding uS14 subfamily. As to quaternary structure, part of the 30S ribosomal subunit. Contacts proteins S3 and S10. Requires Zn(2+) as cofactor.

Its function is as follows. Binds 16S rRNA, required for the assembly of 30S particles and may also be responsible for determining the conformation of the 16S rRNA at the A site. The polypeptide is Small ribosomal subunit protein uS14 (Halothermothrix orenii (strain H 168 / OCM 544 / DSM 9562)).